A 342-amino-acid polypeptide reads, in one-letter code: Protein FDO1 (342 aa).

Disordered regions lie at residues 1–36, 57–76, and 299–322; these read MEEN…NGSD, MSPM…TLSV, and GRTI…GNRT. The segment covering 15 to 25 has biased composition (polar residues); that stretch reads ATWSNQMGSPE. Over residues 308–319 the composition is skewed to basic and acidic residues; the sequence is NTKDESIQDSHG.

As to quaternary structure, interacts with FKH1.

Functionally, in concert with FKH1, plays a role in directionality of mating type switching by controlling which donor mating-type locus is inserted into MAT locus during mating type switching. This Saccharomyces cerevisiae (strain ATCC 204508 / S288c) (Baker's yeast) protein is Protein FDO1.